The primary structure comprises 239 residues: Aldehyde dehydrogenase, dimeric NADP-preferring (239 aa).

Cysteine 30 is an active-site residue.

Belongs to the aldehyde dehydrogenase family. As to quaternary structure, homodimer.

The protein resides in the cytoplasm. It carries out the reaction an aldehyde + NAD(+) + H2O = a carboxylate + NADH + 2 H(+). The catalysed reaction is octanal + NAD(+) + H2O = octanoate + NADH + 2 H(+). In terms of biological role, ALDHs play a major role in the detoxification of alcohol-derived acetaldehyde. They are involved in the metabolism of corticosteroids, biogenic amines, neurotransmitters, and lipid peroxidation. Oxidizes medium and long chain aldehydes into non-toxic fatty acids. Preferentially oxidizes aromatic aldehyde substrates. Comprises about 50 percent of corneal epithelial soluble proteins. May play a role in preventing corneal damage caused by ultraviolet light. The polypeptide is Aldehyde dehydrogenase, dimeric NADP-preferring (ALDH3A1) (Bos taurus (Bovine)).